The sequence spans 397 residues: Gamma tubulin complex adapter mto2 (397 aa).

The span at Met-1 to Ala-13 shows a compositional bias: basic and acidic residues. 3 disordered regions span residues Met-1–Gly-44, Tyr-269–Ser-298, and Arg-346–Pro-397. Polar residues-rich tracts occupy residues Ala-22 to Arg-37, Tyr-269 to Ala-281, Arg-352 to Ser-369, and Ser-382 to Pro-397. Phosphoserine occurs at positions 366 and 396.

In terms of assembly, interacts with mto1; the interaction is direct and required for efficient binding to the gamma-tubulin complex. Interacts with gamma tubulin complex subunits alp4, alp6 and gtb1.

It localises to the cytoplasm. Its subcellular location is the cytoskeleton. It is found in the microtubule organizing center. The protein resides in the spindle pole body. Its function is as follows. Acts together with mto1 to promote nucleation of at least a subset of cytoplasmic microtubules, by recruiting the gamma-tubulin complex to the interphase microtubule organizing center (iMTOC) and to the equatorial MTOC (eMTOC) during anaphase. Does not appear to be required for cytoplasmic astral microtubule nucleation from the spindle pole body (SPB). Required to establish the eMTOC, and thereby to tether the cytokinetic actin ring. This Schizosaccharomyces pombe (strain 972 / ATCC 24843) (Fission yeast) protein is Gamma tubulin complex adapter mto2.